A 614-amino-acid polypeptide reads, in one-letter code: Dihydroxy-acid dehydratase (614 aa).

D81 contacts Mg(2+). C122 provides a ligand contact to [2Fe-2S] cluster. The Mg(2+) site is built by D123 and K124. K124 carries the post-translational modification N6-carboxylysine. C193 provides a ligand contact to [2Fe-2S] cluster. Residue E489 participates in Mg(2+) binding. The active-site Proton acceptor is the S515.

The protein belongs to the IlvD/Edd family. Homodimer. It depends on [2Fe-2S] cluster as a cofactor. Mg(2+) serves as cofactor.

The catalysed reaction is (2R)-2,3-dihydroxy-3-methylbutanoate = 3-methyl-2-oxobutanoate + H2O. The enzyme catalyses (2R,3R)-2,3-dihydroxy-3-methylpentanoate = (S)-3-methyl-2-oxopentanoate + H2O. It functions in the pathway amino-acid biosynthesis; L-isoleucine biosynthesis; L-isoleucine from 2-oxobutanoate: step 3/4. The protein operates within amino-acid biosynthesis; L-valine biosynthesis; L-valine from pyruvate: step 3/4. Functionally, functions in the biosynthesis of branched-chain amino acids. Catalyzes the dehydration of (2R,3R)-2,3-dihydroxy-3-methylpentanoate (2,3-dihydroxy-3-methylvalerate) into 2-oxo-3-methylpentanoate (2-oxo-3-methylvalerate) and of (2R)-2,3-dihydroxy-3-methylbutanoate (2,3-dihydroxyisovalerate) into 2-oxo-3-methylbutanoate (2-oxoisovalerate), the penultimate precursor to L-isoleucine and L-valine, respectively. The sequence is that of Dihydroxy-acid dehydratase from Saccharophagus degradans (strain 2-40 / ATCC 43961 / DSM 17024).